Here is a 107-residue protein sequence, read N- to C-terminus: Neuroparsin-A (107 aa).

The signal sequence occupies residues 1–22; that stretch reads MKATAALVAATLLLAVTLFHRA. A propeptide spanning residues 23–24 is cleaved from the precursor; the sequence is ER.

As to quaternary structure, homodimer; disulfide-linked.

In terms of biological role, neurosparins are multifunctional neurohormones: they inhibit the effects of juvenile hormone, stimulate fluid reabsorption of isolated recta and induces an increase in hemolymph lipid and trehalose levels. In Locusta migratoria (Migratory locust), this protein is Neuroparsin-A.